Consider the following 148-residue polypeptide: Caltractin (148 aa).

EF-hand domains are found at residues 4 to 39 (EQKQ…LGFE), 40 to 75 (PKKE…KMGE), 77 to 112 (DSRE…LGEN), and 113 to 148 (MTDE…TSLF). The Ca(2+) site is built by D17, D19, S21, T23, E28, D53, D55, S57, T59, and E64. Ca(2+)-binding residues include D126, D128, D130, E132, and E137.

Belongs to the centrin family. In terms of tissue distribution, ubiquitous.

Functionally, this calcium-binding protein is found in the basal body complexes (the functional homolog of the centrosome in animal cell). In mitotic cells it is specifically associated with the poles of the mitotic spindles at the sites of the duplicated basal body complexes. In Tetraselmis striata (Green microalga), this protein is Caltractin.